The following is a 374-amino-acid chain: Glycerophosphodiester phosphodiesterase GDPD2 (374 aa).

In terms of domain architecture, GP-PDE spans 38–326 (FSVIGHRGIG…DFVEEIIEST (289 aa)). The tract at residues 330 to 349 (MIRPPPSSSPLPSPSKDDDV) is disordered. Positions 332 to 342 (RPPPSSSPLPS) are enriched in pro residues.

It belongs to the glycerophosphoryl diester phosphodiesterase family. Expressed in roots, shoots, flowers and siliques.

The enzyme catalyses a sn-glycero-3-phosphodiester + H2O = an alcohol + sn-glycerol 3-phosphate + H(+). The sequence is that of Glycerophosphodiester phosphodiesterase GDPD2 from Arabidopsis thaliana (Mouse-ear cress).